The primary structure comprises 681 residues: Peroxisomal acyl-coenzyme A oxidase 2 (681 aa).

Phosphoserine occurs at positions 3 and 9. The residue at position 13 (Thr13) is a Phosphothreonine. 4 positions are modified to N6-succinyllysine: Lys66, Lys137, Lys453, and Lys561. The Microbody targeting signal motif lies at 679–681 (SKL).

It belongs to the acyl-CoA oxidase family. In terms of assembly, homodimer. It depends on FAD as a cofactor. Present in all tissues tested: heart, brain, placenta, lung, liver, skeletal muscle, kidney and pancreas. Most abundant in heart, liver and kidney.

Its subcellular location is the peroxisome. It carries out the reaction (25R)-3alpha,7alpha,12alpha-trihydroxy-5beta-cholestan-26-oyl-CoA + A + H2O = (24R,25R)-3alpha,7alpha,12alpha,24-tetrahydroxy-5beta-cholestan-26-oyl-CoA + AH2. The enzyme catalyses (25S)-3alpha,7alpha,12alpha-trihydroxy-5beta-cholestan-26-oyl-CoA + O2 = (24E)-3alpha,7alpha,12alpha-trihydroxy-5beta-cholest-24-en-26-oyl-CoA + H2O2. Its function is as follows. Oxidizes the CoA esters of the bile acid intermediates di- and tri-hydroxycholestanoic acids. Capable of oxidizing short as well as long chain 2-methyl branched fatty acids. This Homo sapiens (Human) protein is Peroxisomal acyl-coenzyme A oxidase 2.